A 156-amino-acid chain; its full sequence is RNA polymerase sigma factor SigS (156 aa).

A Polymerase core binding motif is present at residues 29-44; the sequence is EYYQLLLIKMWQLSQI. The segment at residues 126–145 is a DNA-binding region (H-T-H motif); it reads QFEIAEIMSLSLSTIKLIKM.

Belongs to the sigma-70 factor family.

In terms of biological role, sigma factors are initiation factors that promote the attachment of RNA polymerase to specific initiation sites and are then released. Sigma-S contributes to the protection against external stress, thus playing a role in cellular fitness and survival. The sequence is that of RNA polymerase sigma factor SigS (sigS) from Staphylococcus aureus (strain COL).